Here is a 689-residue protein sequence, read N- to C-terminus: Glycine--tRNA ligase beta subunit (689 aa).

It belongs to the class-II aminoacyl-tRNA synthetase family. In terms of assembly, tetramer of two alpha and two beta subunits.

The protein localises to the cytoplasm. It catalyses the reaction tRNA(Gly) + glycine + ATP = glycyl-tRNA(Gly) + AMP + diphosphate. The polypeptide is Glycine--tRNA ligase beta subunit (Shewanella pealeana (strain ATCC 700345 / ANG-SQ1)).